The primary structure comprises 170 residues: Large ribosomal subunit protein uL5 (170 aa).

The protein belongs to the universal ribosomal protein uL5 family. As to quaternary structure, part of the 50S ribosomal subunit; contacts the 5S rRNA and probably tRNA. Forms a bridge to the 30S subunit in the 70S ribosome.

Functionally, this is one of the proteins that bind and probably mediate the attachment of the 5S RNA into the large ribosomal subunit, where it forms part of the central protuberance. In the 70S ribosome it contacts protein S13 of the 30S subunit (bridge B1b), connecting the 2 subunits; this bridge is implicated in subunit movement. May contact the P site tRNA; the 5S rRNA and some of its associated proteins might help stabilize positioning of ribosome-bound tRNAs. The protein is Large ribosomal subunit protein uL5 of Thermoplasma acidophilum (strain ATCC 25905 / DSM 1728 / JCM 9062 / NBRC 15155 / AMRC-C165).